The primary structure comprises 648 residues: Pumilio homolog 3 (648 aa).

A disordered region spans residues 1 to 124 (MEVKGKKQFT…KKKKELKQSR (124 aa)). Basic and acidic residues predominate over residues 17–27 (AQEKNRFHKNS). Lys33 carries the post-translational modification N6-acetyllysine. Residues 60 to 69 (LGKKGVKQFK) show a composition bias toward basic residues. A compositionally biased stretch (basic and acidic residues) spans 94–124 (FQPDGRSDESAAKKPKWDDFKKKKKELKQSR). A Nuclear localization signal motif is present at residues 106 to 118 (KKPKWDDFKKKKK). The region spanning 143–510 (EILRRKDCDK…VVLDKSACVL (368 aa)) is the PUM-HD domain. Pumilio repeat units lie at residues 177–212 (HDSTRVIQCYIQYGNEEQRKQAFEELRDDLVELSKA), 213–248 (KYSRNIVKKFLMYGSKPQIAEIIRSFKGHVRKMLRH), 249–277 (AEASAIVEYAYNDKAILEQRNMLTEELYG), 289–325 (RTLDKVLEVQPEKLELIMDEMKQILTPMAQKEAVIKH), 326–361 (SLVHKVFLDFFTYAPPKLRSEMIEAIREAVVYLAHT), 362–397 (HDGARVAMHCLWHGTPKDRKVIVKTMKTYVEKVANG), 398–435 (QYSHLVLLAAFDCIDDTKLVKQIIISEIISSLPSIVND), 436–504 (KYGR…VVLD), 505–551 (KSAC…IAEH), 552–596 (PAGH…WASV), and 597–636 (NRGAIILSSLLQSCDLEVANKVKAALKSLIPTLEKTKSTS). An HA-8 region spans residues 289–297 (RTLDKVLEV).

As to quaternary structure, interacts with PARP1 (via catalytic domain). In terms of tissue distribution, widely expressed.

The protein resides in the nucleus. The protein localises to the nucleolus. It is found in the nucleoplasm. Its subcellular location is the chromosome. In terms of biological role, inhibits the poly(ADP-ribosyl)ation activity of PARP1 and the degradation of PARP1 by CASP3 following genotoxic stress. Binds to double-stranded RNA or DNA without sequence specificity. Involved in development of the eye and of primordial germ cells. This Homo sapiens (Human) protein is Pumilio homolog 3.